The sequence spans 397 residues: E3 ubiquitin-protein ligase RNF149 (397 aa).

The signal sequence occupies residues 1 to 20 (MLRWLCLYSALCALTHGSSA). Residues 39–49 (TNSSVTGSTES) show a composition bias toward polar residues. The disordered stretch occupies residues 39–60 (TNSSVTGSTESGRYGDSSPKES). 2 N-linked (GlcNAc...) asparagine glycosylation sites follow: Asn-40 and Asn-140. Residues 83 to 170 (YIVPGTSAAA…PKGMEIMEPL (88 aa)) form the PA domain. The helical transmembrane segment at 196-216 (VVFVAIAFITMMIISLAWLIF) threads the bilayer. N-linked (GlcNAc...) asparagine glycosylation occurs at Asn-231. The segment at 264-305 (CAVCIENYKTKDLVRILPCKHIFHRLCIDPWLIEHRTCPMCK) adopts an RING-type; atypical zinc-finger fold. The interval 341–397 (SITQEESRSEGNNLPSSSTGSSLQQSNSVKDDAGETTALLDDPGNDNAAATHTQDSH) is disordered. Residues 351–368 (GNNLPSSSTGSSLQQSNS) are compositionally biased toward low complexity. The span at 388-397 (AAATHTQDSH) shows a compositional bias: polar residues.

The protein resides in the membrane. It carries out the reaction S-ubiquitinyl-[E2 ubiquitin-conjugating enzyme]-L-cysteine + [acceptor protein]-L-lysine = [E2 ubiquitin-conjugating enzyme]-L-cysteine + N(6)-ubiquitinyl-[acceptor protein]-L-lysine.. The protein operates within protein modification; protein ubiquitination. E3 ubiquitin-protein ligase. Ubiquitinates BRAF, inducing its proteasomal degradation. This chain is E3 ubiquitin-protein ligase RNF149 (rnf149), found in Xenopus laevis (African clawed frog).